The sequence spans 204 residues: Large ribosomal subunit protein uL10 (204 aa).

The tract at residues 170–204 is disordered; it reads AADPSVIGGAGEASDQEPKTTETPEASAAQDNTNE. Residues 192–204 are compositionally biased toward polar residues; it reads TPEASAAQDNTNE.

This sequence belongs to the universal ribosomal protein uL10 family. Part of the ribosomal stalk of the 50S ribosomal subunit. The N-terminus interacts with L11 and the large rRNA to form the base of the stalk. The C-terminus forms an elongated spine to which L12 dimers bind in a sequential fashion forming a multimeric L10(L12)X complex.

Functionally, forms part of the ribosomal stalk, playing a central role in the interaction of the ribosome with GTP-bound translation factors. The protein is Large ribosomal subunit protein uL10 of Cutibacterium acnes (strain DSM 16379 / KPA171202) (Propionibacterium acnes).